We begin with the raw amino-acid sequence, 163 residues long: Nucleotide-binding protein CJE0423 (163 aa).

The protein belongs to the YajQ family.

Functionally, nucleotide-binding protein. This is Nucleotide-binding protein CJE0423 from Campylobacter jejuni (strain RM1221).